The following is a 105-amino-acid chain: Large ribosomal subunit protein bL21 (105 aa).

This sequence belongs to the bacterial ribosomal protein bL21 family. In terms of assembly, part of the 50S ribosomal subunit. Contacts protein L20.

Functionally, this protein binds to 23S rRNA in the presence of protein L20. This chain is Large ribosomal subunit protein bL21, found in Parafrankia sp. (strain EAN1pec).